The sequence spans 372 residues: Chaperone protein DnaJ (372 aa).

The 66-residue stretch at 5-70 (DFYEVLGVTK…QKRAAYDRYG (66 aa)) folds into the J domain. The CR-type zinc-finger motif lies at 129-207 (GKLASLTLPT…CGGAGRVTRE (79 aa)). Zn(2+)-binding residues include Cys-142, Cys-145, Cys-159, Cys-162, Cys-181, Cys-184, Cys-195, and Cys-198. CXXCXGXG motif repeat units follow at residues 142 to 149 (CEACDGTG), 159 to 166 (CPTCGGQG), 181 to 188 (CPQCHGRG), and 195 to 202 (CQACGGAG).

This sequence belongs to the DnaJ family. As to quaternary structure, homodimer. The cofactor is Zn(2+).

It localises to the cytoplasm. In terms of biological role, participates actively in the response to hyperosmotic and heat shock by preventing the aggregation of stress-denatured proteins and by disaggregating proteins, also in an autonomous, DnaK-independent fashion. Unfolded proteins bind initially to DnaJ; upon interaction with the DnaJ-bound protein, DnaK hydrolyzes its bound ATP, resulting in the formation of a stable complex. GrpE releases ADP from DnaK; ATP binding to DnaK triggers the release of the substrate protein, thus completing the reaction cycle. Several rounds of ATP-dependent interactions between DnaJ, DnaK and GrpE are required for fully efficient folding. Also involved, together with DnaK and GrpE, in the DNA replication of plasmids through activation of initiation proteins. The chain is Chaperone protein DnaJ from Beijerinckia indica subsp. indica (strain ATCC 9039 / DSM 1715 / NCIMB 8712).